We begin with the raw amino-acid sequence, 391 residues long: Ferrochelatase (391 aa).

The Fe cation site is built by His196 and Glu281.

The protein belongs to the ferrochelatase family.

Its subcellular location is the cytoplasm. It carries out the reaction heme b + 2 H(+) = protoporphyrin IX + Fe(2+). The protein operates within porphyrin-containing compound metabolism; protoheme biosynthesis; protoheme from protoporphyrin-IX: step 1/1. Its function is as follows. Catalyzes the ferrous insertion into protoporphyrin IX. The chain is Ferrochelatase from Synechococcus sp. (strain CC9605).